Reading from the N-terminus, the 69-residue chain is Intrepicalcin (69 aa).

The first 27 residues, 1–27, serve as a signal peptide directing secretion; it reads MRQNTMTIIFIVFIVTFASLTIYGAEA. A propeptide spanning residues 28–36 is cleaved from the precursor; the sequence is SEANFLERR. Intrachain disulfides connect C39/C53, C46/C57, and C52/C68. The tract at residues 59 to 60 is essential for stimulation of [3H]ryanodine binding to RYR1; the sequence is RR.

This sequence belongs to the scorpion calcin family. Expressed by the venom gland.

The protein localises to the secreted. Its function is as follows. This toxin stabilizes ryanodine receptor 1 (RyR1) opening in a long-lasting subconductance state (55% of the full conductance state). Furthermore, it triggers calcium release from sarcoplasmic vesicles (45.3 nM are enough to induce a sharp release, and 50% of the total calcium is released after toxin (100 nM) addition) probably by acting as a cell-penetrating peptide (CPP). In addition, it has been shown to dose-dependently stimulate ryanodine binding to RyR1 (EC(50)=17.4 nM). It also augments the bell-shaped calcium-[3H]ryanodine binding curve that is maximal at about 10 uM calcium concentration. It binds a different site as ryanodine. It acts synergistically with caffeine. In vivo, intracerebroventricular injection into mice induces neurotoxic symptoms, followed by death. This Thorellius intrepidus (Scorpion) protein is Intrepicalcin.